Reading from the N-terminus, the 168-residue chain is Phosphopantetheine adenylyltransferase (168 aa).

T17 is a substrate binding site. ATP is bound by residues 17–18 and H25; that span reads TF. Substrate is bound by residues K49, L81, and R95. ATP contacts are provided by residues 96–98, E106, and 131–137; these read GLR and LMYISST.

It belongs to the bacterial CoaD family. Homohexamer. Mg(2+) serves as cofactor.

Its subcellular location is the cytoplasm. The enzyme catalyses (R)-4'-phosphopantetheine + ATP + H(+) = 3'-dephospho-CoA + diphosphate. It participates in cofactor biosynthesis; coenzyme A biosynthesis; CoA from (R)-pantothenate: step 4/5. Reversibly transfers an adenylyl group from ATP to 4'-phosphopantetheine, yielding dephospho-CoA (dPCoA) and pyrophosphate. This chain is Phosphopantetheine adenylyltransferase, found in Legionella pneumophila (strain Paris).